A 496-amino-acid polypeptide reads, in one-letter code: Probable cytosol aminopeptidase (496 aa).

Mn(2+) contacts are provided by K266 and D271. The active site involves K278. Residues D290, D349, and E351 each contribute to the Mn(2+) site. Residue R353 is part of the active site.

It belongs to the peptidase M17 family. Mn(2+) serves as cofactor.

It is found in the cytoplasm. It carries out the reaction Release of an N-terminal amino acid, Xaa-|-Yaa-, in which Xaa is preferably Leu, but may be other amino acids including Pro although not Arg or Lys, and Yaa may be Pro. Amino acid amides and methyl esters are also readily hydrolyzed, but rates on arylamides are exceedingly low.. The enzyme catalyses Release of an N-terminal amino acid, preferentially leucine, but not glutamic or aspartic acids.. Presumably involved in the processing and regular turnover of intracellular proteins. Catalyzes the removal of unsubstituted N-terminal amino acids from various peptides. The chain is Probable cytosol aminopeptidase from Trichodesmium erythraeum (strain IMS101).